The primary structure comprises 303 residues: Oxygen-dependent coproporphyrinogen-III oxidase (303 aa).

Ser-93 contacts substrate. Residues His-97 and His-107 each coordinate a divalent metal cation. His-107 serves as the catalytic Proton donor. 109-111 (NVR) provides a ligand contact to substrate. A divalent metal cation-binding residues include His-149 and His-179. The important for dimerization stretch occupies residues 244-279 (YVEFNLVFDRGTLFGLQSGGRTESILLSMPPLAQWR). 262–264 (GGR) lines the substrate pocket.

The protein belongs to the aerobic coproporphyrinogen-III oxidase family. In terms of assembly, homodimer. A divalent metal cation serves as cofactor.

The protein resides in the cytoplasm. The enzyme catalyses coproporphyrinogen III + O2 + 2 H(+) = protoporphyrinogen IX + 2 CO2 + 2 H2O. It functions in the pathway porphyrin-containing compound metabolism; protoporphyrin-IX biosynthesis; protoporphyrinogen-IX from coproporphyrinogen-III (O2 route): step 1/1. Its function is as follows. Involved in the heme biosynthesis. Catalyzes the aerobic oxidative decarboxylation of propionate groups of rings A and B of coproporphyrinogen-III to yield the vinyl groups in protoporphyrinogen-IX. This is Oxygen-dependent coproporphyrinogen-III oxidase from Bordetella parapertussis (strain 12822 / ATCC BAA-587 / NCTC 13253).